The sequence spans 292 residues: NAD-dependent protein deacetylase sir-2.4 (292 aa).

A Deacetylase sirtuin-type domain is found at Ile-31 to Ser-292. NAD(+) is bound by residues Gly-56 to Trp-75 and Gln-116 to Asp-119. The active-site Proton acceptor is the His-136. Zn(2+) is bound by residues Cys-144, Cys-147, Cys-163, and Cys-169. Residues Gly-216–Ser-218, Asn-242–Gln-244, and Val-260 each bind NAD(+).

It belongs to the sirtuin family. Class IV subfamily. It depends on Zn(2+) as a cofactor.

It carries out the reaction N(6)-acetyl-L-lysyl-[protein] + NAD(+) + H2O = 2''-O-acetyl-ADP-D-ribose + nicotinamide + L-lysyl-[protein]. In terms of biological role, NAD-dependent protein deacetylase. The chain is NAD-dependent protein deacetylase sir-2.4 (sir-2.4) from Caenorhabditis elegans.